The sequence spans 891 residues: Major core protein 4a precursor (891 aa).

Belongs to the poxviridae protein P4a family. Interacts with P39/A4.

Its subcellular location is the virion. Its function is as follows. Core protein 4a is the most abundant virion protein. Major component of the virion core that undergoes proteolytic processing during the immature virion (IV) to mature virion (MV) transition. This is Major core protein 4a precursor from Fowlpox virus (strain NVSL) (FPV).